Here is a 410-residue protein sequence, read N- to C-terminus: Tyrosine--tRNA ligase (410 aa).

Residue Y36 participates in L-tyrosine binding. Residues 41–50 carry the 'HIGH' region motif; that stretch reads ATADSLTAGH. Residues Y169 and Q173 each contribute to the L-tyrosine site. The 'KMSKS' region motif lies at 229–233; that stretch reads KMGKT. K232 serves as a coordination point for ATP. Positions 343–409 constitute an S4 RNA-binding domain; that stretch reads IDLITMMIDA…GKKAYHLFRA (67 aa).

It belongs to the class-I aminoacyl-tRNA synthetase family. TyrS type 1 subfamily. Homodimer.

It localises to the cytoplasm. The enzyme catalyses tRNA(Tyr) + L-tyrosine + ATP = L-tyrosyl-tRNA(Tyr) + AMP + diphosphate + H(+). In terms of biological role, catalyzes the attachment of tyrosine to tRNA(Tyr) in a two-step reaction: tyrosine is first activated by ATP to form Tyr-AMP and then transferred to the acceptor end of tRNA(Tyr). This is Tyrosine--tRNA ligase from Lachnoclostridium phytofermentans (strain ATCC 700394 / DSM 18823 / ISDg) (Clostridium phytofermentans).